The sequence spans 333 residues: Homocysteine S-methyltransferase 2 (333 aa).

One can recognise a Hcy-binding domain in the interval 8-327; the sequence is SMKDFLKQTG…TTIRAIHKRL (320 aa). Residues Cys-245, Cys-312, and Cys-313 each contribute to the Zn(2+) site.

Monomer. Zn(2+) is required as a cofactor. As to expression, expressed predominantly in roots. Expressed in rosette leaves, cauline leaves and developing seeds.

The catalysed reaction is S-methyl-L-methionine + L-homocysteine = 2 L-methionine + H(+). Functionally, catalyzes methyl transfer from S-methylmethionine (SMM) to adenosyl-L-homocysteine (AdoMet). SMM degradation (by HMT-1, HMT-2 and HMT-3) and biosynthesis (by MMT1) constitute the SMM cycle in plants, which is probably required to achieve short term control of AdoMet level. This chain is Homocysteine S-methyltransferase 2 (HMT-2), found in Arabidopsis thaliana (Mouse-ear cress).